The following is a 485-amino-acid chain: MKLKEILTSIQPVKITGNQDIEITGVDIDSRQVESGHLFMAMHGTQTDGHAYIPAAVEKGATAILCEELPAELAEGVTYIQVADSEDAVGKAATTFYGNPSSKLELVGVTGTNGKTTIATLLYNTFRYFGYKVGLISTVCNYIDDEAIPTEHTTPDPITLNRLLGRMADEGCKYVFMEVSSHSIAQKRISGLRFAGGIFTNLTRDHLDYHKTVENYLKAKKKFFDDMPKNSFSLTNLDDKNGLVMTQNTKSKVYTYSLRSLSDFKGRVLESHFEGMLLDFNNHELAVQFIGKFNASNLLAVFGAAVLLGKKEEDVLVALSTLHPVAGRFDAIRSPQGYTAIVDYAHTPDALVNVLNAIHGVLEGKGKVITVVGAGGNRDKGKRPIMAKEAARASDRVIITSDNPRFEEPQDIINDMLAGLDTEDKKKTLSIADRKEAIRTACMLAEKGDVILVAGKGHENYQDIKGVKHHFDDKEVLKEIFSLTV.

Position 30 (S30) interacts with UDP-N-acetyl-alpha-D-muramoyl-L-alanyl-D-glutamate. G111–T117 is a binding site for ATP. Residues T153–T154, S180, Q186, and R188 contribute to the UDP-N-acetyl-alpha-D-muramoyl-L-alanyl-D-glutamate site. K220 is subject to N6-carboxylysine. Residues R378, D402–R405, G455, and E459 contribute to the meso-2,6-diaminopimelate site. The Meso-diaminopimelate recognition motif motif lies at D402–R405.

Belongs to the MurCDEF family. MurE subfamily. Mg(2+) serves as cofactor. Carboxylation is probably crucial for Mg(2+) binding and, consequently, for the gamma-phosphate positioning of ATP.

The protein localises to the cytoplasm. It carries out the reaction UDP-N-acetyl-alpha-D-muramoyl-L-alanyl-D-glutamate + meso-2,6-diaminopimelate + ATP = UDP-N-acetyl-alpha-D-muramoyl-L-alanyl-gamma-D-glutamyl-meso-2,6-diaminopimelate + ADP + phosphate + H(+). It functions in the pathway cell wall biogenesis; peptidoglycan biosynthesis. Catalyzes the addition of meso-diaminopimelic acid to the nucleotide precursor UDP-N-acetylmuramoyl-L-alanyl-D-glutamate (UMAG) in the biosynthesis of bacterial cell-wall peptidoglycan. The protein is UDP-N-acetylmuramoyl-L-alanyl-D-glutamate--2,6-diaminopimelate ligase of Bacteroides fragilis (strain ATCC 25285 / DSM 2151 / CCUG 4856 / JCM 11019 / LMG 10263 / NCTC 9343 / Onslow / VPI 2553 / EN-2).